We begin with the raw amino-acid sequence, 120 residues long: Nitrogen regulatory protein GlnK3 (120 aa).

Residues Thr40 and 48 to 50 contribute to the ADP site; that span reads GEQ. ATP is bound by residues Thr40 and 48-50; that span reads GEQ. 2-oxoglutarate contacts are provided by residues 48-52 and Lys69; that span reads GEQKG. ADP-binding positions include Val75 and 98–101; that span reads GDGR. Residues Val75 and 98 to 101 each bind ATP; that span reads GDGR. Residue Gly98 coordinates 2-oxoglutarate.

The protein belongs to the P(II) protein family. As to quaternary structure, homotrimer. Interacts and forms a complex with Amt3.

The protein resides in the cytoplasm. With respect to regulation, activity is influenced by intracellular pools of the effector molecules ATP, ADP and 2-oxoglutarate. It senses the cellular nitrogen status through 2-oxoglutarate, and the energy level of the cell by binding both ATP and ADP with different affinities. ATP and 2-oxoglutarate prohibit binding to Amt3. ADP promotes the complex formation. Involved in the regulation of nitrogen metabolism. Regulates the activity of its targets by protein-protein interaction in response to the nitrogen status of the cell. Regulates the activity of the ammonia channel Amt3 via direct interaction. The chain is Nitrogen regulatory protein GlnK3 from Archaeoglobus fulgidus (strain ATCC 49558 / DSM 4304 / JCM 9628 / NBRC 100126 / VC-16).